The sequence spans 66 residues: DNA-directed RNA polymerase subunit omega (66 aa).

Belongs to the RNA polymerase subunit omega family. In terms of assembly, the RNAP catalytic core consists of 2 alpha, 1 beta, 1 beta' and 1 omega subunit. When a sigma factor is associated with the core the holoenzyme is formed, which can initiate transcription.

The enzyme catalyses RNA(n) + a ribonucleoside 5'-triphosphate = RNA(n+1) + diphosphate. Functionally, promotes RNA polymerase assembly. Latches the N- and C-terminal regions of the beta' subunit thereby facilitating its interaction with the beta and alpha subunits. The polypeptide is DNA-directed RNA polymerase subunit omega (Geobacillus kaustophilus (strain HTA426)).